We begin with the raw amino-acid sequence, 377 residues long: GDSL esterase/lipase 4 (377 aa).

Positions 1 to 21 (MASPRFNSIIIILFICTISLS) are cleaved as a signal peptide. The active-site Nucleophile is the Ser-44. 5 N-linked (GlcNAc...) asparagine glycosylation sites follow: Asn-135, Asn-188, Asn-194, Asn-207, and Asn-241. Active-site residues include Asp-342 and His-345. A glycan (N-linked (GlcNAc...) asparagine) is linked at Asn-364.

It belongs to the 'GDSL' lipolytic enzyme family.

Its subcellular location is the secreted. The sequence is that of GDSL esterase/lipase 4 (GLIP4) from Arabidopsis thaliana (Mouse-ear cress).